A 358-amino-acid polypeptide reads, in one-letter code: DNA polymerase IV (358 aa).

In terms of domain architecture, UmuC spans 4-185; sequence IIHIDMDCYF…LSLRKIPGVG (182 aa). Asp8 and Asp103 together coordinate Mg(2+). The active site involves Glu104.

The protein belongs to the DNA polymerase type-Y family. In terms of assembly, monomer. Requires Mg(2+) as cofactor.

It localises to the cytoplasm. It catalyses the reaction DNA(n) + a 2'-deoxyribonucleoside 5'-triphosphate = DNA(n+1) + diphosphate. Its function is as follows. Poorly processive, error-prone DNA polymerase involved in untargeted mutagenesis. Copies undamaged DNA at stalled replication forks, which arise in vivo from mismatched or misaligned primer ends. These misaligned primers can be extended by PolIV. Exhibits no 3'-5' exonuclease (proofreading) activity. May be involved in translesional synthesis, in conjunction with the beta clamp from PolIII. The chain is DNA polymerase IV from Shewanella baltica (strain OS195).